A 103-amino-acid polypeptide reads, in one-letter code: Histone H4 (103 aa).

The segment covering Met-1–Gly-14 has biased composition (gly residues). The disordered stretch occupies residues Met-1 to Arg-20. The residue at position 6 (Lys-6) is an N6-acetyl-N6-methyllysine; alternate. Lys-6, Lys-9, and Lys-13 each carry N6-acetyllysine; alternate. 3 positions are modified to N6-methyllysine; alternate: Lys-6, Lys-9, and Lys-13. N6-butyryllysine; alternate occurs at positions 9 and 13. Lys-13 carries the post-translational modification N6-acetyl-N6-methyllysine; alternate. Lys-17 is subject to N6-acetyllysine. A DNA-binding region spans residues Lys-17–Lys-21. Residue Lys-32 is modified to N6-succinyllysine. Arg-56 is subject to Omega-N-methylarginine. Phosphoserine occurs at positions 61 and 65. Residue Lys-78 is modified to N6-succinyllysine. N6-acetyllysine is present on Lys-80. Lys-92 carries the post-translational modification N6-glutaryllysine.

The protein belongs to the histone H4 family. As to quaternary structure, the nucleosome is a histone octamer containing two molecules each of H2A, H2B, H3 and H4 assembled in one H3-H4 heterotetramer and two H2A-H2B heterodimers. The octamer wraps approximately 147 bp of DNA. Histone H4 is a component of the UAF (upstream activation factor) complex which consists of UAF30, RRN5, RRN9, RRN10, and histones H3 and H4. Post-translationally, glutarylation at Lys-92 (H4K91glu) destabilizes nucleosomes by promoting dissociation of the H2A-H2B dimers from nucleosomes.

The protein resides in the nucleus. It localises to the chromosome. Functionally, core component of nucleosome. Nucleosomes wrap and compact DNA into chromatin, limiting DNA accessibility to the cellular machineries which require DNA as a template. Histones thereby play a central role in transcription regulation, DNA repair, DNA replication and chromosomal stability. DNA accessibility is regulated via a complex set of post-translational modifications of histones, also called histone code, and nucleosome remodeling. Component of the UAF (upstream activation factor) complex which interacts with the upstream element of the RNA polymerase I promoter and forms a stable preinitiation complex. Together with SPT15/TBP UAF seems to stimulate basal transcription to a fully activated level. This Saccharomyces cerevisiae (strain ATCC 204508 / S288c) (Baker's yeast) protein is Histone H4 (HHF1).